Here is a 266-residue protein sequence, read N- to C-terminus: uncharacterized protein (266 aa).

4 helical membrane passes run 9–29, 79–99, 122–142, and 193–213; these read IFIIFLSFLMIVLSITSIELP, GIMTCMGINILSLVIILINPF, LSVMIVIFYILSTTIGLMLSG, and GWYLSIVLLFLSLILAVMVFI.

The protein resides in the membrane. This is an uncharacterized protein from Dictyostelium discoideum (Social amoeba).